Consider the following 434-residue polypeptide: Salicylate hydroxylase (434 aa).

Residue 9 to 38 (RIGIVGGGISGVALALELCRYSHIQVQLFE) coordinates FAD.

As to quaternary structure, monomer. The cofactor is FAD.

The catalysed reaction is salicylate + NADH + O2 + 2 H(+) = catechol + CO2 + NAD(+) + H2O. Its pathway is aromatic compound metabolism; naphthalene degradation. The chain is Salicylate hydroxylase (nahG) from Pseudomonas putida (Arthrobacter siderocapsulatus).